The following is a 248-amino-acid chain: MLKTRIIPCVLLKNSQLVKSIEFKDFRTIGHLTSTMRIYNARNVDELIILDIDASKSGEIDFESIEDLAKECFMPLTIGGGIKTLEDIQKILNLGADKISINSKALEDMDFISKAGNRFGSQCIVCSIDVKRKGDQFCVYDRGNLLEKSPLELALEYEKKGAGELLLTSVDFEGKAKGYDLELLKIFQNKLKIPLIINGGLSKPSDGVEALNLGADALAGAYIFHFSKYTPKDVKEELARQGFAVRLL.

The active site involves Asp-129.

The protein belongs to the HisA/HisF family. Heterodimer of HisH and HisF.

Its subcellular location is the cytoplasm. It carries out the reaction 5-[(5-phospho-1-deoxy-D-ribulos-1-ylimino)methylamino]-1-(5-phospho-beta-D-ribosyl)imidazole-4-carboxamide + L-glutamine = D-erythro-1-(imidazol-4-yl)glycerol 3-phosphate + 5-amino-1-(5-phospho-beta-D-ribosyl)imidazole-4-carboxamide + L-glutamate + H(+). It functions in the pathway amino-acid biosynthesis; L-histidine biosynthesis; L-histidine from 5-phospho-alpha-D-ribose 1-diphosphate: step 5/9. Functionally, IGPS catalyzes the conversion of PRFAR and glutamine to IGP, AICAR and glutamate. The HisF subunit catalyzes the cyclization activity that produces IGP and AICAR from PRFAR using the ammonia provided by the HisH subunit. This Campylobacter jejuni subsp. jejuni serotype O:2 (strain ATCC 700819 / NCTC 11168) protein is Putative imidazole glycerol phosphate synthase subunit hisF2 (hisF2).